Reading from the N-terminus, the 739-residue chain is UPF0313 protein YgiQ (739 aa).

The region spanning 372–650 is the Radical SAM core domain; it reads AYEMIRFSVN…KALLRYHDPA (279 aa). [4Fe-4S] cluster is bound by residues cysteine 386, cysteine 390, and cysteine 393. A disordered region spans residues 686–739; the sequence is EARRQNRNTRPALTKHTPMATQCQTPATAKKASSTQSRPVNAGAKKRPKAAVGR. The segment covering 704-724 has biased composition (polar residues); it reads MATQCQTPATAKKASSTQSRP. The segment covering 729 to 739 has biased composition (basic residues); it reads AKKRPKAAVGR.

Belongs to the UPF0313 family. Requires [4Fe-4S] cluster as cofactor.

This is UPF0313 protein YgiQ from Escherichia coli O157:H7.